A 344-amino-acid polypeptide reads, in one-letter code: Fructose-1,6-bisphosphatase class 1 (344 aa).

E91, D110, L112, and D113 together coordinate Mg(2+). Residues 113–116 and N200 each bind substrate; that span reads DGSS. Position 272 (E272) interacts with Mg(2+).

Belongs to the FBPase class 1 family. Homotetramer. Mg(2+) is required as a cofactor.

The protein localises to the cytoplasm. The enzyme catalyses beta-D-fructose 1,6-bisphosphate + H2O = beta-D-fructose 6-phosphate + phosphate. It functions in the pathway carbohydrate biosynthesis; Calvin cycle. This chain is Fructose-1,6-bisphosphatase class 1, found in Rhodopseudomonas palustris (strain BisA53).